The chain runs to 95 residues: Putative regulatory protein Daud_1598 (95 aa).

This sequence belongs to the RemA family.

In Desulforudis audaxviator (strain MP104C), this protein is Putative regulatory protein Daud_1598.